The sequence spans 540 residues: Glucose-6-phosphate isomerase (540 aa).

The active-site Proton donor is Glu346. Residues His377 and Lys505 contribute to the active site.

The protein belongs to the GPI family.

The protein resides in the cytoplasm. It carries out the reaction alpha-D-glucose 6-phosphate = beta-D-fructose 6-phosphate. It participates in carbohydrate biosynthesis; gluconeogenesis. The protein operates within carbohydrate degradation; glycolysis; D-glyceraldehyde 3-phosphate and glycerone phosphate from D-glucose: step 2/4. Functionally, catalyzes the reversible isomerization of glucose-6-phosphate to fructose-6-phosphate. In Francisella tularensis subsp. holarctica (strain FTNF002-00 / FTA), this protein is Glucose-6-phosphate isomerase.